The chain runs to 267 residues: Hydroxyethylthiazole kinase (267 aa).

M46 is a substrate binding site. ATP-binding residues include R121 and T167. A194 provides a ligand contact to substrate.

This sequence belongs to the Thz kinase family. The cofactor is Mg(2+).

The enzyme catalyses 5-(2-hydroxyethyl)-4-methylthiazole + ATP = 4-methyl-5-(2-phosphooxyethyl)-thiazole + ADP + H(+). Its pathway is cofactor biosynthesis; thiamine diphosphate biosynthesis; 4-methyl-5-(2-phosphoethyl)-thiazole from 5-(2-hydroxyethyl)-4-methylthiazole: step 1/1. Its function is as follows. Catalyzes the phosphorylation of the hydroxyl group of 4-methyl-5-beta-hydroxyethylthiazole (THZ). This is Hydroxyethylthiazole kinase from Rhizobium leguminosarum bv. trifolii (strain WSM2304).